A 1013-amino-acid chain; its full sequence is MDIS1-interacting receptor like kinase 1 (1013 aa).

The signal sequence occupies residues 1 to 23 (MKMKIIVLFLYYCYIGSTSSVLA). Topologically, residues 24-633 (SIDNVNELSV…SSHSSLHGKR (610 aa)) are extracellular. N-linked (GlcNAc...) asparagine glycosylation is found at Asn-61, Asn-82, Asn-101, Asn-137, Asn-146, Asn-151, and Asn-155. 22 LRR repeats span residues 70–94 (NGNV…ISQL), 95–117 (SSLV…SIPP), 119–137 (KSID…LFSN), 139–163 (SLGL…LGNL), 164–186 (VSLE…SFKN), 187–213 (LQKL…QLPS), 215–234 (ETAI…EFGN), 235–259 (INSL…LGKL), 260–283 (KSLE…IGSI), 284–307 (TTLK…ITKL), 308–331 (KNLQ…ISSL), 333–355 (QLQV…LGKN), 357–379 (PLQW…LCNK), 381–403 (NLTK…LSTC), 405–426 (SLVR…GFGK), 427–451 (LEKL…ISDS), 453–475 (SLSF…ILSI), 477–498 (NLQA…QFQD), 499–523 (CPSL…IASC), 525–547 (KLVS…ITTM), 548–571 (SALA…IGTS), and 573–595 (ALEL…GFLK). N-linked (GlcNAc...) asparagine glycosylation is present at Asn-199. N-linked (GlcNAc...) asparagine glycosylation occurs at Asn-271. Asn-341 carries N-linked (GlcNAc...) asparagine glycosylation. Residues Asn-381, Asn-389, and Asn-417 are each glycosylated (N-linked (GlcNAc...) asparagine). N-linked (GlcNAc...) asparagine glycosylation is found at Asn-535, Asn-557, and Asn-578. The chain crosses the membrane as a helical span at residues 634-654 (IVAGWLIGIASVLALGILTIV). At 655 to 1013 (TRTLYKKWYS…FSTSPVNGLL (359 aa)) the chain is on the cytoplasmic side. Phosphothreonine is present on Thr-691. The Protein kinase domain occupies 699–983 (IKESNMIGMG…SMLGEAKPRR (285 aa)). ATP is bound by residues 705–713 (IGMGATGIV) and Lys-728. At Thr-710 the chain carries Phosphothreonine; by autocatalysis. A phosphothreonine; by autocatalysis mark is found at Thr-741 and Thr-742. 2 positions are modified to phosphotyrosine: Tyr-777 and Tyr-818. Asp-831 (proton acceptor) is an active-site residue. At Thr-862 the chain carries Phosphothreonine; by autocatalysis. Residue Ser-864 is modified to Phosphoserine; by autocatalysis. A Phosphotyrosine modification is found at Tyr-872. At Tyr-879 the chain carries Phosphotyrosine; by autocatalysis. Residues Thr-880 and Thr-992 each carry the phosphothreonine; by autocatalysis modification. Residues 976–1013 (LGEAKPRRKSNSNEENTSRSLAEKHSSVFSTSPVNGLL) are disordered. The span at 1002–1013 (SVFSTSPVNGLL) shows a compositional bias: polar residues.

The protein belongs to the protein kinase superfamily. Ser/Thr protein kinase family. In terms of assembly, homodimer. Interacts with MDIS1 and LURE1.2. In terms of processing, autophosphorylation induced by the interaction with LURE1.2. Expressed in pollen tubes.

Its subcellular location is the cell membrane. It carries out the reaction L-seryl-[protein] + ATP = O-phospho-L-seryl-[protein] + ADP + H(+). The catalysed reaction is L-threonyl-[protein] + ATP = O-phospho-L-threonyl-[protein] + ADP + H(+). In terms of biological role, involved in the regulation of procambium maintenance and polarity during vascular-tissue development. Involved in the pollen tube perception of the female signal. Phosphorylates MDSI1. The protein is MDIS1-interacting receptor like kinase 1 of Arabidopsis thaliana (Mouse-ear cress).